Reading from the N-terminus, the 200-residue chain is MFPEQQKEEFVSVWVRDPRIQKEDFWHSYIDYEICIHTNSMCFTMKTSCVRRRYREFVWLRQRLQSNALLVQLPELPSKNLFFNMNNRQHVDQRRQGLEDFLRKVLQNALLLSDSSLHLFLQSHLNSEDIEACVSGQTKYSVEEAIHKFALMNRRFPEEEEGKKENDIDYDSESSSSGFGHSSDDSSSHGCKMSTAPQES.

The segment at 8-125 (EEFVSVWVRD…SLHLFLQSHL (118 aa)) is required for interaction with ATP6V1D. The PX domain occupies 10-127 (FVSVWVRDPR…HLFLQSHLNS (118 aa)). Residues R53, K79, and R94 each coordinate a 1,2-diacyl-sn-glycero-3-phospho-(1D-myo-inositol-3-phosphate). A compositionally biased stretch (basic and acidic residues) spans 156 to 167 (FPEEEEGKKEND). Positions 156 to 200 (FPEEEEGKKENDIDYDSESSSSGFGHSSDDSSSHGCKMSTAPQES) are disordered.

It belongs to the sorting nexin family. Interacts with ATP6V1D; may play a role in ciliogenesis.

It is found in the cytoplasm. It localises to the endosome membrane. The protein localises to the cytoskeleton. The protein resides in the microtubule organizing center. Its subcellular location is the centrosome. In terms of biological role, probable phosphoinositide-binding protein involved in protein sorting and membrane trafficking in endosomes. Plays a role in cilium biogenesis through regulation of the transport and the localization of proteins to the cilium. Required for the localization to the cilium of V-ATPase subunit ATP6V1D and ATP6V0D1, and RAB8A. Involved in osteoclast differentiation and therefore bone resorption. This is Sorting nexin-10 (SNX10) from Bos taurus (Bovine).